The following is a 299-amino-acid chain: Mitochondrial 2-oxodicarboxylate carrier (299 aa).

3 Solcar repeats span residues 11–100 (REAS…YKKL), 107–196 (SPAL…VKNM), and 205–294 (LEFL…TYSW). Transmembrane regions (helical) follow at residues 17-37 (IVAG…LDVV), 70-89 (FGFY…KRAV), 113-133 (TIAG…FEVV), 167-187 (GLNK…MVYF), 205-225 (LEFL…SVIN), and 277-297 (LGPG…WLQE).

The protein belongs to the mitochondrial carrier (TC 2.A.29) family.

It localises to the mitochondrion inner membrane. It carries out the reaction 2-oxoadipate(in) + 2-oxoglutarate(out) = 2-oxoadipate(out) + 2-oxoglutarate(in). The catalysed reaction is hexanedioate(in) + 2-oxoglutarate(out) = hexanedioate(out) + 2-oxoglutarate(in). It catalyses the reaction L-2-aminoadipate(in) + 2-oxoglutarate(out) = L-2-aminoadipate(out) + 2-oxoglutarate(in). The enzyme catalyses glutarate(in) + 2-oxoglutarate(out) = glutarate(out) + 2-oxoglutarate(in). It carries out the reaction 2-oxoheptanedioate(in) + 2-oxoglutarate(out) = 2-oxoheptanedioate(out) + 2-oxoglutarate(in). The catalysed reaction is heptanedioate(in) + 2-oxoglutarate(out) = heptanedioate(out) + 2-oxoglutarate(in). It catalyses the reaction citrate(in) + 2-oxoglutarate(out) = citrate(out) + 2-oxoglutarate(in). In terms of biological role, transports dicarboxylates across the inner membranes of mitochondria by a counter-exchange mechanism. Can transport 2-oxoadipate (2-oxohexanedioate), 2-oxoglutarate, adipate (hexanedioate), glutarate, and to a lesser extent, pimelate (heptanedioate), 2-oxopimelate (2-oxoheptanedioate), 2-aminoadipate (2-aminohexanedioate), oxaloacetate, and citrate. Plays a central role in catabolism of lysine, hydroxylysine, and tryptophan, by transporting common metabolite intermediates (such as 2-oxoadipate) into the mitochondria, where it is converted into acetyl-CoA and can enter the citric acid (TCA) cycle. In Pongo abelii (Sumatran orangutan), this protein is Mitochondrial 2-oxodicarboxylate carrier (SLC25A21).